Consider the following 246-residue polypeptide: 3-deoxy-manno-octulosonate cytidylyltransferase (246 aa).

The protein belongs to the KdsB family.

The protein resides in the cytoplasm. It carries out the reaction 3-deoxy-alpha-D-manno-oct-2-ulosonate + CTP = CMP-3-deoxy-beta-D-manno-octulosonate + diphosphate. It functions in the pathway nucleotide-sugar biosynthesis; CMP-3-deoxy-D-manno-octulosonate biosynthesis; CMP-3-deoxy-D-manno-octulosonate from 3-deoxy-D-manno-octulosonate and CTP: step 1/1. It participates in bacterial outer membrane biogenesis; lipopolysaccharide biosynthesis. Functionally, activates KDO (a required 8-carbon sugar) for incorporation into bacterial lipopolysaccharide in Gram-negative bacteria. In Rickettsia peacockii (strain Rustic), this protein is 3-deoxy-manno-octulosonate cytidylyltransferase.